A 64-amino-acid polypeptide reads, in one-letter code: Large ribosomal subunit protein bL35 (64 aa).

Belongs to the bacterial ribosomal protein bL35 family.

In Lactiplantibacillus plantarum (strain ATCC BAA-793 / NCIMB 8826 / WCFS1) (Lactobacillus plantarum), this protein is Large ribosomal subunit protein bL35.